Reading from the N-terminus, the 1044-residue chain is Spindle assembly checkpoint serine/threonine-protein kinase bub1 (1044 aa).

In terms of domain architecture, BUB1 N-terminal spans 36–204 (FQEELDIIEE…SSPFPPPRIV (169 aa)). Disordered stretches follow at residues 209–259 (PVSS…PLLY), 317–343 (VHHDSSSSNVSPIYKNPVAEQSDTPTR), 404–446 (ESLE…SQEE), 484–555 (KNSN…DSNS), and 685–705 (IKPKAGGPGRRRSSNRHSLDG). Positions 223–239 (QVFSDASSSRDSQNASD) are enriched in polar residues. A compositionally biased stretch (polar residues) spans 430-442 (NSSNSGATSLTGR). Residues 504 to 518 (STLQEETATGTTSTT) are compositionally biased toward low complexity. Residues 544–555 (RSPQYSTVDSNS) are compositionally biased toward polar residues. The residue at position 550 (threonine 550) is a Phosphothreonine. In terms of domain architecture, Protein kinase spans 718-1044 (LSVISKLGQG…LLKSIEKRKI (327 aa)). The ATP site is built by alanine 728, phenylalanine 729, alanine 730, lysine 762, and aspartate 809. Aspartate 861 acts as the Proton acceptor in catalysis. The ATP site is built by aspartate 865, asparagine 866, and aspartate 900.

The protein belongs to the protein kinase superfamily. Ser/Thr protein kinase family. BUB1 subfamily. As to quaternary structure, part of the BUB1-BUB3 complex, composed of bub1 and bub3. Interacts with spc7 (when phosphorylated on MELT motifs); to recruit the bub1-bub3 complex to kinetochores. Interacts with mad3. Autophosphorylated.

It is found in the nucleus. The protein resides in the chromosome. Its subcellular location is the centromere. It localises to the kinetochore. The enzyme catalyses L-seryl-[protein] + ATP = O-phospho-L-seryl-[protein] + ADP + H(+). The catalysed reaction is L-threonyl-[protein] + ATP = O-phospho-L-threonyl-[protein] + ADP + H(+). Functionally, involved in mitotic spindle assembly checkpoint signaling, a process that delays anaphase until chromosomes are bioriented on the spindle, and in the repair of incorrect mitotic kinetochore-spindle microtubule attachments. Acts as a kinetochore scaffold for the recruitment of other spindle assembly checkpoint components. This Schizosaccharomyces pombe (strain 972 / ATCC 24843) (Fission yeast) protein is Spindle assembly checkpoint serine/threonine-protein kinase bub1.